We begin with the raw amino-acid sequence, 482 residues long: Aspartyl/glutamyl-tRNA(Asn/Gln) amidotransferase subunit B (482 aa).

The protein belongs to the GatB/GatE family. GatB subfamily. In terms of assembly, heterotrimer of A, B and C subunits.

The catalysed reaction is L-glutamyl-tRNA(Gln) + L-glutamine + ATP + H2O = L-glutaminyl-tRNA(Gln) + L-glutamate + ADP + phosphate + H(+). The enzyme catalyses L-aspartyl-tRNA(Asn) + L-glutamine + ATP + H2O = L-asparaginyl-tRNA(Asn) + L-glutamate + ADP + phosphate + 2 H(+). Its function is as follows. Allows the formation of correctly charged Asn-tRNA(Asn) or Gln-tRNA(Gln) through the transamidation of misacylated Asp-tRNA(Asn) or Glu-tRNA(Gln) in organisms which lack either or both of asparaginyl-tRNA or glutaminyl-tRNA synthetases. The reaction takes place in the presence of glutamine and ATP through an activated phospho-Asp-tRNA(Asn) or phospho-Glu-tRNA(Gln). The protein is Aspartyl/glutamyl-tRNA(Asn/Gln) amidotransferase subunit B of Ehrlichia canis (strain Jake).